The chain runs to 607 residues: Pyruvate decarboxylase 1 (607 aa).

Substrate-binding residues include D69 and H156. Residues 434–516 (DSWFNCQKLK…FLINNGGYTI (83 aa)) form a thiamine pyrophosphate binding region. D484, N511, and G513 together coordinate Mg(2+). E517 lines the substrate pocket.

It belongs to the TPP enzyme family. In terms of assembly, homotetramer. It depends on a metal cation as a cofactor. Thiamine diphosphate serves as cofactor. Highly expressed in seeds, and at lower levels in roots and siliques.

It catalyses the reaction a 2-oxocarboxylate + H(+) = an aldehyde + CO2. Its function is as follows. May play a role in ethanolic fermentation during anoxia. The chain is Pyruvate decarboxylase 1 (PDC1) from Arabidopsis thaliana (Mouse-ear cress).